Consider the following 559-residue polypeptide: Formate--tetrahydrofolate ligase (559 aa).

68–75 contacts ATP; the sequence is TPAGEGKT.

This sequence belongs to the formate--tetrahydrofolate ligase family. Homotetramer.

The catalysed reaction is (6S)-5,6,7,8-tetrahydrofolate + formate + ATP = (6R)-10-formyltetrahydrofolate + ADP + phosphate. It functions in the pathway one-carbon metabolism; tetrahydrofolate interconversion. The polypeptide is Formate--tetrahydrofolate ligase (Moorella thermoacetica (Clostridium thermoaceticum)).